The primary structure comprises 534 residues: ATP synthase subunit alpha (534 aa).

Residue glycine 170–threonine 177 coordinates ATP. A disordered region spans residues histidine 505 to lysine 534.

Belongs to the ATPase alpha/beta chains family. F-type ATPases have 2 components, CF(1) - the catalytic core - and CF(0) - the membrane proton channel. CF(1) has five subunits: alpha(3), beta(3), gamma(1), delta(1), epsilon(1). CF(0) has three main subunits: a(1), b(2) and c(9-12). The alpha and beta chains form an alternating ring which encloses part of the gamma chain. CF(1) is attached to CF(0) by a central stalk formed by the gamma and epsilon chains, while a peripheral stalk is formed by the delta and b chains.

The protein resides in the cell inner membrane. The catalysed reaction is ATP + H2O + 4 H(+)(in) = ADP + phosphate + 5 H(+)(out). Produces ATP from ADP in the presence of a proton gradient across the membrane. The alpha chain is a regulatory subunit. The sequence is that of ATP synthase subunit alpha from Acidobacterium capsulatum (strain ATCC 51196 / DSM 11244 / BCRC 80197 / JCM 7670 / NBRC 15755 / NCIMB 13165 / 161).